Here is a 100-residue protein sequence, read N- to C-terminus: Small ribosomal subunit protein uS14 (100 aa).

Belongs to the universal ribosomal protein uS14 family. As to quaternary structure, part of the 30S ribosomal subunit. Contacts proteins S3 and S10.

Functionally, binds 16S rRNA, required for the assembly of 30S particles and may also be responsible for determining the conformation of the 16S rRNA at the A site. The chain is Small ribosomal subunit protein uS14 from Trichormus variabilis (strain ATCC 29413 / PCC 7937) (Anabaena variabilis).